We begin with the raw amino-acid sequence, 71 residues long: Small ribosomal subunit protein bS21 (71 aa).

A compositionally biased stretch (basic residues) spans 48-59 (AKASAVKRHAKK). The disordered stretch occupies residues 48–71 (AKASAVKRHAKKLSRENARRIRLY). The segment covering 60 to 71 (LSRENARRIRLY) has biased composition (basic and acidic residues).

This sequence belongs to the bacterial ribosomal protein bS21 family.

The protein is Small ribosomal subunit protein bS21 of Aeromonas hydrophila subsp. hydrophila (strain ATCC 7966 / DSM 30187 / BCRC 13018 / CCUG 14551 / JCM 1027 / KCTC 2358 / NCIMB 9240 / NCTC 8049).